A 215-amino-acid polypeptide reads, in one-letter code: Pyrrolidone-carboxylate peptidase (215 aa).

Catalysis depends on residues Glu78, Cys141, and His165.

It belongs to the peptidase C15 family. Homotetramer.

The protein localises to the cytoplasm. The enzyme catalyses Release of an N-terminal pyroglutamyl group from a polypeptide, the second amino acid generally not being Pro.. Functionally, removes 5-oxoproline from various penultimate amino acid residues except L-proline. This is Pyrrolidone-carboxylate peptidase from Lactobacillus johnsonii (strain CNCM I-12250 / La1 / NCC 533).